The primary structure comprises 591 residues: Aspartate--tRNA(Asp/Asn) ligase (591 aa).

Residue E174 coordinates L-aspartate. The tract at residues 198–201 (QLFK) is aspartate. R220 provides a ligand contact to L-aspartate. ATP-binding positions include 220-222 (RDE) and Q229. H450 lines the L-aspartate pocket. E483 is an ATP binding site. Residue R490 participates in L-aspartate binding. 535–538 (GLDR) provides a ligand contact to ATP.

Belongs to the class-II aminoacyl-tRNA synthetase family. Type 1 subfamily. Homodimer.

It localises to the cytoplasm. It catalyses the reaction tRNA(Asx) + L-aspartate + ATP = L-aspartyl-tRNA(Asx) + AMP + diphosphate. Aspartyl-tRNA synthetase with relaxed tRNA specificity since it is able to aspartylate not only its cognate tRNA(Asp) but also tRNA(Asn). Reaction proceeds in two steps: L-aspartate is first activated by ATP to form Asp-AMP and then transferred to the acceptor end of tRNA(Asp/Asn). The protein is Aspartate--tRNA(Asp/Asn) ligase of Pseudomonas savastanoi pv. phaseolicola (strain 1448A / Race 6) (Pseudomonas syringae pv. phaseolicola (strain 1448A / Race 6)).